A 227-amino-acid chain; its full sequence is Lipoprotein-releasing system ATP-binding protein LolD (227 aa).

An ABC transporter domain is found at 6–227; it reads LKIEGLRKTY…HLEDGVLVER (222 aa). Residue 43 to 50 participates in ATP binding; it reads APSGAGKS.

Belongs to the ABC transporter superfamily. Lipoprotein translocase (TC 3.A.1.125) family. As to quaternary structure, the complex is composed of two ATP-binding proteins (LolD) and two transmembrane proteins (LolC and LolE).

The protein localises to the cell inner membrane. Its function is as follows. Part of the ABC transporter complex LolCDE involved in the translocation of mature outer membrane-directed lipoproteins, from the inner membrane to the periplasmic chaperone, LolA. Responsible for the formation of the LolA-lipoprotein complex in an ATP-dependent manner. The sequence is that of Lipoprotein-releasing system ATP-binding protein LolD from Ruegeria sp. (strain TM1040) (Silicibacter sp.).